The chain runs to 345 residues: Aspartate--ammonia ligase (345 aa).

This sequence belongs to the class-II aminoacyl-tRNA synthetase family. AsnA subfamily.

Its subcellular location is the cytoplasm. The enzyme catalyses L-aspartate + NH4(+) + ATP = L-asparagine + AMP + diphosphate + H(+). The protein operates within amino-acid biosynthesis; L-asparagine biosynthesis; L-asparagine from L-aspartate (ammonia route): step 1/1. The polypeptide is Aspartate--ammonia ligase (Bacteroides fragilis (strain ATCC 25285 / DSM 2151 / CCUG 4856 / JCM 11019 / LMG 10263 / NCTC 9343 / Onslow / VPI 2553 / EN-2)).